The sequence spans 367 residues: Voltage-gated potassium channel subunit beta-2 (367 aa).

Residues threonine 56, tryptophan 57, glutamine 63, and aspartate 85 each contribute to the NADP(+) site. Tyrosine 90 functions as the Proton donor/acceptor in the catalytic mechanism. NADP(+)-binding residues include asparagine 158, serine 188, arginine 189, glutamine 214, tryptophan 243, serine 244, proline 245, leucine 246, alanine 247, cysteine 248, lysine 254, tyrosine 262, arginine 264, glycine 323, serine 325, glutamine 329, glutamate 332, and asparagine 333.

It belongs to the shaker potassium channel beta subunit family. In terms of assembly, forms heteromultimeric complex with alpha subunits.

Its subcellular location is the cytoplasm. The protein resides in the membrane. It localises to the cell membrane. The protein localises to the cell projection. It is found in the axon. Its subcellular location is the synapse. The protein resides in the synaptosome. It localises to the cytoskeleton. Regulatory subunit of the voltage-gated potassium (Kv) Shaker channels composed of pore-forming and potassium-conducting alpha subunits and of regulatory beta subunits. The beta-2/KCNAB2 cytoplasmic subunit may promote potassium channel closure via a mechanism that does not involve physical obstruction of the channel pore. Enhances current amplitude of Kv1.1/KCNA1 and Kv2.2/KCNA2 channels. May display nicotinamide adenine dinucleotide phosphate (NADPH)-dependent aldoketoreductase activity by catalyzing the NADPH-dependent reduction of a wide range of aldehyde and ketone substrates. The binding of oxidized and reduced nucleotide may alter Kv channel gating and contribute to dynamic fine tuning of cell excitability. The sequence is that of Voltage-gated potassium channel subunit beta-2 (kcnab2) from Xenopus laevis (African clawed frog).